A 91-amino-acid polypeptide reads, in one-letter code: Gene 76 protein (91 aa).

The disordered stretch occupies residues 58–81 (ELPSCDESPKGEARRDNDNRDGGK).

The chain is Gene 76 protein (76) from Mycobacterium phage L5 (Mycobacteriophage L5).